A 613-amino-acid polypeptide reads, in one-letter code: MVLNSTPPASPGAEAQQRPPRYPGEDTAPTSRKEIWGWYAYGIAAEVFAVCGVGSFLPLTLEQLARERGTLLSSHLPCVGSSSPSTAPGNGTTTATLRRDGTDNDQCVVSVLGLQVNTASFAMYTFSLAVLVQALTLISFSALADYENNRKTLLLAFGFIGSMTSMLFIFIAPPVYILGSLLVVIGVTCLGSSFVVLNSFLPVLVANDPSIQTAHKEEGEELSPVNSSGEFARSEDLDEENVRDSDDHFTTGHGLKTKAAGSASPELQLSTRISSKGVGLGYCAAVLVQILSILMLFALSKTSLPKISGTLPMRFVLLLVGIWWFSFTMVSRRWLRDRPGPPLASSKGAASNSRWRIWLRLIGFAWKSLWKTVKVAVKLREVIVFLIAWFLLSDAMATVSGTAILFARTELKMSTTAVGLLSITATLSGMAGAFLWPVVSRRLRLKSNHTIMLCIALFEVIPLYGMLAYIPLFKKWGVIGLQQPWEIFPLGIVHGLVSGGLSSYCRSFFGLLIPPGSEAAFYALYAATDKGSSFIGPAIVGMLIDATGQVRSGFFFIAVLILLPIPLIWMVNAEKGRQDGLAMADILEKSHGEHASEYGGPSEEAEGLLARDI.

A disordered region spans residues 1 to 28; that stretch reads MVLNSTPPASPGAEAQQRPPRYPGEDTA. The helical transmembrane segment at 41 to 61 threads the bilayer; it reads YGIAAEVFAVCGVGSFLPLTL. Over residues 80 to 96 the composition is skewed to polar residues; the sequence is GSSSPSTAPGNGTTTAT. The disordered stretch occupies residues 80–99; that stretch reads GSSSPSTAPGNGTTTATLRR. An N-linked (GlcNAc...) asparagine glycan is attached at N90. 3 helical membrane passes run 120–140, 155–177, and 189–209; these read SFAM…LISF, LAFG…PVYI, and CLGS…ANDP. The disordered stretch occupies residues 216 to 257; that stretch reads KEEGEELSPVNSSGEFARSEDLDEENVRDSDDHFTTGHGLKT. N-linked (GlcNAc...) asparagine glycosylation occurs at N226. Residues 232 to 250 show a composition bias toward basic and acidic residues; the sequence is ARSEDLDEENVRDSDDHFT. Helical transmembrane passes span 278–298, 307–327, 382–402, and 418–438; these read VGLG…MLFA, ISGT…WFSF, VIVF…VSGT, and VGLL…LWPV. N-linked (GlcNAc...) asparagine glycosylation occurs at N448. A run of 4 helical transmembrane segments spans residues 453–473, 488–510, 522–544, and 553–573; these read LCIA…IPLF, FPLG…SFFG, YALY…GMLI, and GFFF…MVNA. A disordered region spans residues 592–613; the sequence is GEHASEYGGPSEEAEGLLARDI.

Belongs to the ATG22 family.

It is found in the vacuole membrane. In terms of biological role, vacuolar effluxer which mediate the efflux of amino acids resulting from autophagic degradation. The release of autophagic amino acids allows the maintenance of protein synthesis and viability during nitrogen starvation. The sequence is that of Autophagy-related protein 22-2 (atg22-2) from Neosartorya fischeri (strain ATCC 1020 / DSM 3700 / CBS 544.65 / FGSC A1164 / JCM 1740 / NRRL 181 / WB 181) (Aspergillus fischerianus).